Reading from the N-terminus, the 87-residue chain is Putative membrane protein insertion efficiency factor (87 aa).

Belongs to the UPF0161 family.

The protein localises to the cell membrane. Could be involved in insertion of integral membrane proteins into the membrane. This Ligilactobacillus salivarius (strain UCC118) (Lactobacillus salivarius) protein is Putative membrane protein insertion efficiency factor.